The chain runs to 390 residues: Dihydroorotase (390 aa).

Residues His54 and His56 each contribute to the Zn(2+) site. Substrate is bound by residues 56–58 and Asn88; that span reads HIR. Zn(2+)-binding residues include Lys136, His160, His197, and Asp259. Lys136 bears the N6-carboxylysine mark. The active site involves Asp259. Residues His263 and 277 to 278 contribute to the substrate site; that span reads PG.

Belongs to the metallo-dependent hydrolases superfamily. DHOase family. Class I DHOase subfamily. Zn(2+) serves as cofactor.

The catalysed reaction is (S)-dihydroorotate + H2O = N-carbamoyl-L-aspartate + H(+). Its pathway is pyrimidine metabolism; UMP biosynthesis via de novo pathway; (S)-dihydroorotate from bicarbonate: step 3/3. Catalyzes the reversible cyclization of carbamoyl aspartate to dihydroorotate. This is Dihydroorotase from Saccharolobus solfataricus (strain ATCC 35092 / DSM 1617 / JCM 11322 / P2) (Sulfolobus solfataricus).